The sequence spans 431 residues: Histidinol dehydrogenase (431 aa).

3 residues coordinate NAD(+): Tyr-127, Gln-189, and Asn-212. Positions 237, 259, and 262 each coordinate substrate. Residues Gln-259 and His-262 each coordinate Zn(2+). Residues Glu-326 and His-327 each act as proton acceptor in the active site. Substrate contacts are provided by His-327, Asp-360, Glu-414, and His-419. Asp-360 lines the Zn(2+) pocket. His-419 provides a ligand contact to Zn(2+).

Belongs to the histidinol dehydrogenase family. It depends on Zn(2+) as a cofactor.

It catalyses the reaction L-histidinol + 2 NAD(+) + H2O = L-histidine + 2 NADH + 3 H(+). Its pathway is amino-acid biosynthesis; L-histidine biosynthesis; L-histidine from 5-phospho-alpha-D-ribose 1-diphosphate: step 9/9. Its function is as follows. Catalyzes the sequential NAD-dependent oxidations of L-histidinol to L-histidinaldehyde and then to L-histidine. This is Histidinol dehydrogenase from Xanthomonas campestris pv. campestris (strain ATCC 33913 / DSM 3586 / NCPPB 528 / LMG 568 / P 25).